Here is a 182-residue protein sequence, read N- to C-terminus: MKAFLHHLQNEAKLIISLTYCVDGEFALNEIARATLQQYGIVQLSSATNSDSETEAATSKAVKTAYDKAVEAKTTADGKVGLNGNESINGEKTFENRIVAKRNIRISDSPHYASRGDYLNIGANNGDCWFEYKLSNQEIGTLRMHANGDLTYKRQKIYLKMDCWQAIHKRKLKVFTAKRKKR.

This is an uncharacterized protein from Haemophilus influenzae (strain ATCC 51907 / DSM 11121 / KW20 / Rd).